The primary structure comprises 543 residues: Acrosin-binding protein (543 aa).

Residues methionine 1 to alanine 25 form the signal peptide. The tract at residues glutamine 26–phenylalanine 106 is pro-ACR binding. Residues glutamine 26–arginine 273 constitute a propeptide, removed in mature form. A disordered region spans residues serine 185–valine 272. Basic and acidic residues predominate over residues alanine 192–glutamate 220. Residues glutamate 221–lysine 231 show a composition bias toward acidic residues. The span at glutamine 232–glutamate 243 shows a compositional bias: basic and acidic residues. Residues leucine 319–arginine 427 form a pro-ACR binding region.

Binds proacrosin (pro-ACR). Does not bind the mature form of ACR. Post-translationally, phosphorylated on Tyr residues in capacitated sperm. In terms of processing, the N-terminus is blocked. Synthesized as a 60-kDa precursor, the 32-kDa mature form is post-translationally produced by the removal of the N-terminal half of the precursor during sperm maturation in the testis and/or epididymis. As to expression, expression restricted to testis in normal tissue. Expressed in a wide spectrum of cancers, including bladder, breast, liver, lung and colon cancers.

It is found in the secreted. It localises to the cytoplasmic vesicle. The protein resides in the secretory vesicle. The protein localises to the acrosome. Functionally, acrosomal protein that maintains proacrosin (pro-ACR) as an enzymatically inactive zymogen in the acrosome. Involved also in the acrosome formation. The chain is Acrosin-binding protein from Homo sapiens (Human).